Reading from the N-terminus, the 178-residue chain is ATP synthase subunit delta (178 aa).

It belongs to the ATPase delta chain family. As to quaternary structure, F-type ATPases have 2 components, F(1) - the catalytic core - and F(0) - the membrane proton channel. F(1) has five subunits: alpha(3), beta(3), gamma(1), delta(1), epsilon(1). F(0) has three main subunits: a(1), b(2) and c(10-14). The alpha and beta chains form an alternating ring which encloses part of the gamma chain. F(1) is attached to F(0) by a central stalk formed by the gamma and epsilon chains, while a peripheral stalk is formed by the delta and b chains.

Its subcellular location is the cell membrane. Its function is as follows. F(1)F(0) ATP synthase produces ATP from ADP in the presence of a proton or sodium gradient. F-type ATPases consist of two structural domains, F(1) containing the extramembraneous catalytic core and F(0) containing the membrane proton channel, linked together by a central stalk and a peripheral stalk. During catalysis, ATP synthesis in the catalytic domain of F(1) is coupled via a rotary mechanism of the central stalk subunits to proton translocation. In terms of biological role, this protein is part of the stalk that links CF(0) to CF(1). It either transmits conformational changes from CF(0) to CF(1) or is implicated in proton conduction. This is ATP synthase subunit delta from Desulfitobacterium hafniense (strain Y51).